We begin with the raw amino-acid sequence, 469 residues long: 3-isopropylmalate dehydratase large subunit (469 aa).

Positions 347, 410, and 413 each coordinate [4Fe-4S] cluster.

Belongs to the aconitase/IPM isomerase family. LeuC type 1 subfamily. Heterodimer of LeuC and LeuD. It depends on [4Fe-4S] cluster as a cofactor.

The enzyme catalyses (2R,3S)-3-isopropylmalate = (2S)-2-isopropylmalate. It functions in the pathway amino-acid biosynthesis; L-leucine biosynthesis; L-leucine from 3-methyl-2-oxobutanoate: step 2/4. Catalyzes the isomerization between 2-isopropylmalate and 3-isopropylmalate, via the formation of 2-isopropylmaleate. This chain is 3-isopropylmalate dehydratase large subunit, found in Polynucleobacter necessarius subsp. necessarius (strain STIR1).